Consider the following 563-residue polypeptide: (R)-mandelonitrile lyase 1 (563 aa).

The N-terminal stretch at 1 to 27 (MEKSTMSAILLVLHLFVLLLQYSEVHS) is a signal peptide. FAD-binding positions include 63-64 (TS), 82-83 (ER), valine 129, threonine 133, and 137-140 (NAGV). N-linked (GlcNAc...) asparagine glycosylation is found at asparagine 145 and asparagine 162. Residue valine 244 coordinates FAD. Substrate is bound at residue cysteine 355. Asparagine 379 is a glycosylation site (N-linked (GlcNAc...) asparagine). The cysteines at positions 426 and 477 are disulfide-linked. Position 484 (tyrosine 484) interacts with substrate. Residues 485–486 (WH) and glycine 514 each bind FAD. Catalysis depends on histidine 486, which acts as the Proton donor. The Proton acceptor role is filled by histidine 524. Residue 525 to 526 (PQ) participates in FAD binding.

It belongs to the GMC oxidoreductase family. In terms of assembly, monomer. FAD is required as a cofactor. In terms of processing, glycosylated. As to expression, seeds. Localized within cotyledonary parenchyma cells.

Its subcellular location is the vacuole. The protein resides in the aleurone grain. It catalyses the reaction (R)-mandelonitrile = benzaldehyde + hydrogen cyanide. Its function is as follows. Involved in cyanogenesis, the release of HCN from injured tissues. Catalyzes the stereospecific addition of HCN to a variety of aldehydes in vitro. It is a major seed constituent, and could have the additional role of a storage form for reduced nitrogen. This Prunus serotina (Black cherry) protein is (R)-mandelonitrile lyase 1 (MDL1).